Here is a 430-residue protein sequence, read N- to C-terminus: tRNA pseudouridine synthase Pus10 (430 aa).

Aspartate 253 (nucleophile) is an active-site residue. Positions 320 and 392 each coordinate substrate.

The protein belongs to the pseudouridine synthase Pus10 family.

It catalyses the reaction uridine(54) in tRNA = pseudouridine(54) in tRNA. The enzyme catalyses uridine(55) in tRNA = pseudouridine(55) in tRNA. In terms of biological role, responsible for synthesis of pseudouridine from uracil-54 and uracil-55 in the psi GC loop of transfer RNAs. The protein is tRNA pseudouridine synthase Pus10 of Ignisphaera aggregans (strain DSM 17230 / JCM 13409 / AQ1.S1).